The primary structure comprises 332 residues: Endo-1,4-beta-xylanase B (332 aa).

A GH10 domain is found at 2–331 (STEIPSLSAS…KDSFWRIIGQ (330 aa)). The active-site Proton donor is the Glu-134. Glu-241 functions as the Nucleophile in the catalytic mechanism.

This sequence belongs to the glycosyl hydrolase 10 (cellulase F) family. Cytoplasmic xylanase subfamily.

The protein resides in the cytoplasm. The enzyme catalyses Endohydrolysis of (1-&gt;4)-beta-D-xylosidic linkages in xylans.. Its pathway is glycan degradation; xylan degradation. Its activity is regulated as follows. Completely inhibited by Ag(2+), Cu(2+), Hg(2+), Mn(2+), Pb(2+) and Sn(2+). Strongly inhibited by Fe(2+) and Zn(2+). Co(2+) and Ni(2+) cause little inhibition while Ca(2+) and Mg(2+) do not affect enzyme activity, and Ba(2+) produces a small stimulating effect. Irreversibly inactivated by SDS in vitro. In terms of biological role, plays a role in plant xylan biodegradation, probably via the hydrolysis of short xylooligosaccharides resulting from extracellular xylan hydrolysis, once they have been transported inside cells. Shows similar activity on xylans of different rate of arabinose or methylglucuronic substitution. Also displays high activity on aryl-xylosides. Is active on xylotetraose and xylotriose, but does not hydrolyze xylobiose, indicating that XynB is a xylanase and not a beta-xylosidase. In Paenibacillus barcinonensis, this protein is Endo-1,4-beta-xylanase B (xynB).